A 380-amino-acid polypeptide reads, in one-letter code: Chaperone protein DnaJ (380 aa).

Residues 5–70 (DFYEVLGVSK…NLRARYDQYG (66 aa)) form the J domain. The CR-type zinc-finger motif lies at 135 to 213 (GVSKEIKVPS…CHGEGRYQKT (79 aa)). Cys-148, Cys-151, Cys-165, Cys-168, Cys-187, Cys-190, Cys-201, and Cys-204 together coordinate Zn(2+). 4 CXXCXGXG motif repeats span residues 148-155 (CEVCNGSG), 165-172 (CPTCHGAG), 187-194 (CPHCHGRG), and 201-208 (CRKCHGEG).

This sequence belongs to the DnaJ family. Homodimer. Requires Zn(2+) as cofactor.

The protein resides in the cytoplasm. Functionally, participates actively in the response to hyperosmotic and heat shock by preventing the aggregation of stress-denatured proteins and by disaggregating proteins, also in an autonomous, DnaK-independent fashion. Unfolded proteins bind initially to DnaJ; upon interaction with the DnaJ-bound protein, DnaK hydrolyzes its bound ATP, resulting in the formation of a stable complex. GrpE releases ADP from DnaK; ATP binding to DnaK triggers the release of the substrate protein, thus completing the reaction cycle. Several rounds of ATP-dependent interactions between DnaJ, DnaK and GrpE are required for fully efficient folding. Also involved, together with DnaK and GrpE, in the DNA replication of plasmids through activation of initiation proteins. The polypeptide is Chaperone protein DnaJ (Aeromonas salmonicida (strain A449)).